Reading from the N-terminus, the 247-residue chain is PF03932 family protein CutC (247 aa).

The segment covering 205-222 has biased composition (polar residues); it reads KSTRPSLMESNSSAQMGS. The segment at 205–226 is disordered; sequence KSTRPSLMESNSSAQMGSNDVD.

The protein belongs to the CutC family.

It is found in the cytoplasm. The polypeptide is PF03932 family protein CutC (Vibrio atlanticus (strain LGP32) (Vibrio splendidus (strain Mel32))).